The sequence spans 341 residues: Adenine deaminase (341 aa).

Zn(2+) is bound by residues His-24, His-26, and His-204. Glu-207 functions as the Proton donor in the catalytic mechanism. Asp-285 is a Zn(2+) binding site. Asp-286 is a substrate binding site.

Belongs to the metallo-dependent hydrolases superfamily. Adenosine and AMP deaminases family. Adenine deaminase type 2 subfamily. The cofactor is Zn(2+).

The enzyme catalyses adenine + H2O + H(+) = hypoxanthine + NH4(+). Its function is as follows. Catalyzes the hydrolytic deamination of adenine to hypoxanthine. Plays an important role in the purine salvage pathway and in nitrogen catabolism. This is Adenine deaminase from Sphingopyxis alaskensis (strain DSM 13593 / LMG 18877 / RB2256) (Sphingomonas alaskensis).